The primary structure comprises 98 residues: Small ribosomal subunit protein uS17 (98 aa).

Belongs to the universal ribosomal protein uS17 family. As to quaternary structure, part of the 30S ribosomal subunit.

In terms of biological role, one of the primary rRNA binding proteins, it binds specifically to the 5'-end of 16S ribosomal RNA. This is Small ribosomal subunit protein uS17 from Mesomycoplasma hyopneumoniae (strain 232) (Mycoplasma hyopneumoniae).